The following is a 62-amino-acid chain: Disintegrin atropoimin (62 aa).

Residues 1–62 (EAGEECDCGT…ADCPRNGLYG (62 aa)) enclose the Disintegrin domain. 5 disulfides stabilise this stretch: Cys6-Cys21, Cys8-Cys16, Cys15-Cys38, Cys29-Cys35, and Cys34-Cys48. Residues 41-42 (GD) carry the Cell attachment site motif.

Belongs to the venom metalloproteinase (M12B) family. P-II subfamily. P-IIa sub-subfamily. In terms of assembly, monomer. In terms of tissue distribution, expressed by the venom gland.

The protein localises to the secreted. Inhibits ADP- (IC(50)=63 nM) and collagen-induced (IC(50)=53 nM) aggregation of human platelets. In vitro, inhibits adhesion of endothelial cells to vitronectin, type-I collagen and, to a lower degree, fibronectin and laminin. This Metlapilcoatlus mexicanus (Central American jumping pitviper) protein is Disintegrin atropoimin.